A 697-amino-acid chain; its full sequence is Serine/threonine-protein kinase tousled-like 2 (697 aa).

2 disordered regions span residues 27–136 and 289–315; these read KAPL…TAPV and LAKR…NKTN. The span at 31–44 shows a compositional bias: polar residues; the sequence is NSESSNQSLCSLGS. Residues 46–62 show a composition bias toward basic and acidic residues; it reads SDKELEQTPEKKQNDQR. Over residues 111 to 131 the composition is skewed to low complexity; the sequence is SSPQHSLSNPLPLPSQQCSPP. Coiled coils occupy residues 264–293 and 334–372; these read AFQN…AKRK and FKLR…IHNE. The region spanning 387–666 is the Protein kinase domain; it reads YLLLHLLGRG…VQQLACDPYL (280 aa). ATP is bound by residues 393-401 and lysine 416; that span reads LGRGGFSEV. The Proton acceptor role is filled by aspartate 517.

Belongs to the protein kinase superfamily. Ser/Thr protein kinase family. As to quaternary structure, monomer. May form homodimers; homodimerization may enhance autophosphoylation and enzymatic activity. Heterodimer with TLK1. Mg(2+) is required as a cofactor. In terms of processing, phosphorylated. Autophosphorylated; phosphorylation promotes the assembly of higher order oligomers and enzymatic activity.

The protein localises to the nucleus. It is found in the nucleoplasm. The protein resides in the cytoplasm. It localises to the perinuclear region. Its subcellular location is the cytoskeleton. The catalysed reaction is L-seryl-[protein] + ATP = O-phospho-L-seryl-[protein] + ADP + H(+). The enzyme catalyses L-threonyl-[protein] + ATP = O-phospho-L-threonyl-[protein] + ADP + H(+). In terms of biological role, serine/threonine-protein kinase involved in the process of chromatin assembly and probably also DNA replication, transcription, repair, and chromosome segregation. Negative regulator of amino acid starvation-induced autophagy. The protein is Serine/threonine-protein kinase tousled-like 2 of Xenopus tropicalis (Western clawed frog).